Consider the following 201-residue polypeptide: MIPAIEEVVEHLSRLPGIGVKLATRLAYHLLKRDPAEAQVLARGIACLHERVYRCVCCGAFCEGRTCALCTDASRDRGIICVVERAQDVEMMAGVGEYRGLFHVLGGVIAPLEGVGPDQLRIAALLKRLQESSVREVILALNPTVEGDTTALYVQKILANFPVIVTRLASGIPVGGDLEYIDRTTLAHSLRGRRPLDCSEA.

The C4-type zinc-finger motif lies at 55-70; it reads CVCCGAFCEGRTCALC. The Toprim domain occupies 78 to 173; the sequence is GIICVVERAQ…IVTRLASGIP (96 aa).

The protein belongs to the RecR family.

Its function is as follows. May play a role in DNA repair. It seems to be involved in an RecBC-independent recombinational process of DNA repair. It may act with RecF and RecO. This Treponema pallidum (strain Nichols) protein is Recombination protein RecR.